Consider the following 116-residue polypeptide: UPF0482 protein ECA2253 (116 aa).

Residues 1 to 31 (MNHYSFSSLIRALIPLSLVIVSAVWQPAALA) form the signal peptide.

It belongs to the UPF0482 family.

The polypeptide is UPF0482 protein ECA2253 (Pectobacterium atrosepticum (strain SCRI 1043 / ATCC BAA-672) (Erwinia carotovora subsp. atroseptica)).